Consider the following 158-residue polypeptide: Putative pre-16S rRNA nuclease (158 aa).

This sequence belongs to the YqgF nuclease family.

The protein localises to the cytoplasm. In terms of biological role, could be a nuclease involved in processing of the 5'-end of pre-16S rRNA. The sequence is that of Putative pre-16S rRNA nuclease from Hahella chejuensis (strain KCTC 2396).